A 122-amino-acid polypeptide reads, in one-letter code: Small ribosomal subunit protein uS13 (122 aa).

Residues 99 to 122 (RGQRTHTNARTRKGPAKAIAGKKK) are disordered.

Belongs to the universal ribosomal protein uS13 family. As to quaternary structure, part of the 30S ribosomal subunit. Forms a loose heterodimer with protein S19. Forms two bridges to the 50S subunit in the 70S ribosome.

Located at the top of the head of the 30S subunit, it contacts several helices of the 16S rRNA. In the 70S ribosome it contacts the 23S rRNA (bridge B1a) and protein L5 of the 50S subunit (bridge B1b), connecting the 2 subunits; these bridges are implicated in subunit movement. Contacts the tRNAs in the A and P-sites. The sequence is that of Small ribosomal subunit protein uS13 from Rhodopseudomonas palustris (strain TIE-1).